Reading from the N-terminus, the 350-residue chain is Beta-ketoacyl-[acyl-carrier-protein] synthase III (350 aa).

Residues Cys120 and His256 contribute to the active site. An ACP-binding region spans residues 257–261 (QANVR). Asn286 is an active-site residue.

It belongs to the thiolase-like superfamily. FabH family. Homodimer.

It is found in the cytoplasm. The enzyme catalyses malonyl-[ACP] + acetyl-CoA + H(+) = 3-oxobutanoyl-[ACP] + CO2 + CoA. It functions in the pathway lipid metabolism; fatty acid biosynthesis. Catalyzes the condensation reaction of fatty acid synthesis by the addition to an acyl acceptor of two carbons from malonyl-ACP. Catalyzes the first condensation reaction which initiates fatty acid synthesis and may therefore play a role in governing the total rate of fatty acid production. Possesses both acetoacetyl-ACP synthase and acetyl transacylase activities. Its substrate specificity determines the biosynthesis of branched-chain and/or straight-chain of fatty acids. The polypeptide is Beta-ketoacyl-[acyl-carrier-protein] synthase III (Deinococcus deserti (strain DSM 17065 / CIP 109153 / LMG 22923 / VCD115)).